We begin with the raw amino-acid sequence, 323 residues long: Mediator of RNA polymerase II transcription subunit 6 (323 aa).

2 disordered regions span residues 172 to 213 (FTPS…DAAG) and 271 to 323 (TDRT…KVGS). Residues 189-203 (DASQPGTQSQQSKEN) show a composition bias toward polar residues. Residues 276 to 285 (AAKPPATAAK) show a composition bias toward low complexity. Residues 314–323 (MRKKKTKVGS) show a composition bias toward basic residues.

It belongs to the Mediator complex subunit 6 family. As to quaternary structure, component of the Mediator complex.

Its subcellular location is the nucleus. Its function is as follows. Component of the Mediator complex, a coactivator involved in the regulated transcription of nearly all RNA polymerase II-dependent genes. Mediator functions as a bridge to convey information from gene-specific regulatory proteins to the basal RNA polymerase II transcription machinery. Mediator is recruited to promoters by direct interactions with regulatory proteins and serves as a scaffold for the assembly of a functional preinitiation complex with RNA polymerase II and the general transcription factors. This is Mediator of RNA polymerase II transcription subunit 6 (med6) from Aspergillus niger (strain ATCC MYA-4892 / CBS 513.88 / FGSC A1513).